The primary structure comprises 759 residues: Phosphoribosylformylglycinamidine synthase subunit PurL (759 aa).

The active site involves histidine 46. Residues tyrosine 49 and lysine 88 each contribute to the ATP site. Glutamate 90 contacts Mg(2+). Substrate contacts are provided by residues 91-94 and arginine 113; that span reads SHNH. Histidine 92 (proton acceptor) is an active-site residue. A Mg(2+)-binding site is contributed by aspartate 114. Glutamine 237 contributes to the substrate binding site. Aspartate 265 contacts Mg(2+). A substrate-binding site is contributed by 309–311; it reads ESQ. Positions 498 and 535 each coordinate ATP. Asparagine 536 is a Mg(2+) binding site. Serine 538 lines the substrate pocket.

The protein belongs to the FGAMS family. As to quaternary structure, monomer. Part of the FGAM synthase complex composed of 1 PurL, 1 PurQ and 2 PurS subunits.

The protein localises to the cytoplasm. The catalysed reaction is N(2)-formyl-N(1)-(5-phospho-beta-D-ribosyl)glycinamide + L-glutamine + ATP + H2O = 2-formamido-N(1)-(5-O-phospho-beta-D-ribosyl)acetamidine + L-glutamate + ADP + phosphate + H(+). Its pathway is purine metabolism; IMP biosynthesis via de novo pathway; 5-amino-1-(5-phospho-D-ribosyl)imidazole from N(2)-formyl-N(1)-(5-phospho-D-ribosyl)glycinamide: step 1/2. Functionally, part of the phosphoribosylformylglycinamidine synthase complex involved in the purines biosynthetic pathway. Catalyzes the ATP-dependent conversion of formylglycinamide ribonucleotide (FGAR) and glutamine to yield formylglycinamidine ribonucleotide (FGAM) and glutamate. The FGAM synthase complex is composed of three subunits. PurQ produces an ammonia molecule by converting glutamine to glutamate. PurL transfers the ammonia molecule to FGAR to form FGAM in an ATP-dependent manner. PurS interacts with PurQ and PurL and is thought to assist in the transfer of the ammonia molecule from PurQ to PurL. In Anaeromyxobacter dehalogenans (strain 2CP-C), this protein is Phosphoribosylformylglycinamidine synthase subunit PurL.